The sequence spans 27 residues: C-reactive protein P1 (27 aa).

Residues 1 to 27 (IPQDLSGKMLTFPKEEDDDDVKLMTPK) are disordered. The Pentraxin (PTX) domain maps to 6 to 27 (SGKMLTFPKEEDDDDVKLMTPK).

This sequence belongs to the pentraxin family. In terms of assembly, homopentamer. Pentraxin (or pentaxin) have a discoid arrangement of 5 non-covalently bound subunits. Exists as a dimer under reducing conditions. The cofactor is Ca(2+). Glycosylated.

The protein localises to the secreted. Functionally, displays several functions associated with host defense: it promotes agglutination, bacterial capsular swelling, phagocytosis, and complement fixation through its calcium-dependent binding to phosphorylcholine. The protein is C-reactive protein P1 of Gadus morhua (Atlantic cod).